The following is a 382-amino-acid chain: Alkanesulfonate monooxygenase (382 aa).

This sequence belongs to the SsuD family.

The catalysed reaction is an alkanesulfonate + FMNH2 + O2 = an aldehyde + FMN + sulfite + H2O + 2 H(+). Functionally, catalyzes the desulfonation of aliphatic sulfonates. The polypeptide is Alkanesulfonate monooxygenase (Pseudomonas putida (strain ATCC 700007 / DSM 6899 / JCM 31910 / BCRC 17059 / LMG 24140 / F1)).